The chain runs to 447 residues: GTPase Der (447 aa).

EngA-type G domains follow at residues 2–166 (YRVA…PEYE) and 183–358 (IKVA…NQSW). Residues 8 to 15 (GRPNVGKS), 55 to 59 (DTGGY), 118 to 121 (NKID), 189 to 196 (GKPNAGKS), 236 to 240 (DTAGL), and 301 to 304 (NKID) each bind GTP. The KH-like domain occupies 359–443 (KRVGTGQLNR…PIKLLLRGKE (85 aa)).

Belongs to the TRAFAC class TrmE-Era-EngA-EngB-Septin-like GTPase superfamily. EngA (Der) GTPase family. As to quaternary structure, associates with the 50S ribosomal subunit.

In terms of biological role, GTPase that plays an essential role in the late steps of ribosome biogenesis. In Persephonella marina (strain DSM 14350 / EX-H1), this protein is GTPase Der.